A 558-amino-acid polypeptide reads, in one-letter code: WW domain-containing adapter protein with coiled-coil (558 aa).

Disordered stretches follow at residues 1 to 129 (MVMY…WSEH), 159 to 244 (QRQK…SPAP), and 321 to 461 (VAQQ…APGR). Polar residues predominate over residues 22–32 (QPYQTLKYSSK). Basic and acidic residues-rich tracts occupy residues 33-46 (SHPDHRHEKMRDSN) and 56-70 (RRSDSPDNKHMDNTG). Positions 72 to 82 (GRAKAIHPHRG) are enriched in basic residues. Residues 99–116 (NHSSLHSSNSHSNPNKSS) show a composition bias toward low complexity. One can recognise a WW domain in the interval 120–153 (FEPADDWSEHISSSGKKYYYNCRTEVSQWEKPKE). Basic and acidic residues predominate over residues 175–184 (PKDRDYRREA). Polar residues predominate over residues 188–200 (TPASYSSTKSSIA). Low complexity predominate over residues 204–217 (PSSLTPSSSSAAVS). Polar residues-rich tracts occupy residues 223–234 (NSASSASGSTVP) and 321–378 (VAQQ…MTVK). Residues 402 to 431 (SPRTLQRQSSQRSPSPGPNHMGSNSSSSSN) are compositionally biased toward low complexity. Gly residues predominate over residues 432–443 (NGGGGGGQGPGV). A coiled-coil region spans residues 529 to 555 (QATLREQRILFLRQQIKELEKLKNQNS).

It is found in the nucleus. Acts as a linker between gene transcription and histone H2B monoubiquitination at 'Lys-120' (H2BK120ub1). Positive regulator of amino acid starvation-induced autophagy. Positively regulates MTOR activity. May negatively regulate the ubiquitin proteasome pathway. In Danio rerio (Zebrafish), this protein is WW domain-containing adapter protein with coiled-coil (waca).